The sequence spans 232 residues: LexA repressor (232 aa).

The H-T-H motif DNA-binding region spans 26–46 (FDEMKDALDLRSKSGIHRLIT). Catalysis depends on for autocatalytic cleavage activity residues serine 153 and lysine 191.

The protein belongs to the peptidase S24 family. In terms of assembly, homodimer.

It carries out the reaction Hydrolysis of Ala-|-Gly bond in repressor LexA.. Represses a number of genes involved in the response to DNA damage (SOS response), including recA and lexA. In the presence of single-stranded DNA, RecA interacts with LexA causing an autocatalytic cleavage which disrupts the DNA-binding part of LexA, leading to derepression of the SOS regulon and eventually DNA repair. In Afipia carboxidovorans (strain ATCC 49405 / DSM 1227 / KCTC 32145 / OM5) (Oligotropha carboxidovorans), this protein is LexA repressor.